The following is a 420-amino-acid chain: Cytochrome P-450 monooxygenase DoxA (420 aa).

Cysteine 367 serves as a coordination point for heme.

Belongs to the cytochrome P450 family. Monomer. Requires heme as cofactor.

Its subcellular location is the cytoplasm. It carries out the reaction 13-deoxydaunorubicin + NADPH + O2 + H(+) = 13-dihydrodaunorubicin + NADP(+) + H2O. The enzyme catalyses 13-dihydrodaunorubicin + NADPH + O2 + H(+) = daunorubicin + NADP(+) + 2 H2O. It catalyses the reaction 13-deoxycarminomycin + NADPH + O2 + H(+) = 13-dihydrocarminomycin + NADP(+) + H2O. The catalysed reaction is 13-dihydrocarminomycin + NADPH + O2 + H(+) = carminomycin + NADP(+) + 2 H2O. It carries out the reaction daunorubicin + NADPH + O2 + H(+) = doxorubicin + NADP(+) + H2O. It participates in antibiotic biosynthesis; daunorubicin biosynthesis. The protein operates within antibiotic biosynthesis; carminomycin biosynthesis. It functions in the pathway antibiotic biosynthesis; doxorubicin biosynthesis. Involved in the biosynthesis of the anthracyclines carminomycin, daunorubicin (daunomycin) and doxorubicin (adriamycin) which are aromatic polyketide antibiotics that exhibit high cytotoxicity and are widely applied in the chemotherapy of a variety of cancers. In vivo, DoxA catalyzes the C-13 hydroxylation of 13-deoxycarminomycin and 13-deoxydaunorubicin to yield 13-dihydrocarminomycin and 13-dihydrodaunorubicin, respectively, as well as the oxidation of these 13-dihydro-anthracyclines to their respective 13-keto forms, carminomycin and daunorubicin. In vivo, it also catalyzes the C-14 hydroxylation of daunorubicin to form doxorubicin. It can only use NADP. DoxA acts jointly with DnrV. This is Cytochrome P-450 monooxygenase DoxA (doxA) from Streptomyces peucetius subsp. caesius.